A 410-amino-acid polypeptide reads, in one-letter code: Pectate lyase PEL9 (410 aa).

The signal sequence occupies residues 1–18; it reads MMGKSVWVFAALFPAVLA. Ca(2+)-binding residues include Asp191, Asp215, Asp216, and Asp219. Asn234 is a glycosylation site (N-linked (GlcNAc...) asparagine). Lys271 acts as the Proton acceptor in catalysis. Residues 342-351 show a composition bias toward polar residues; it reads GEAPTSLSDE. Disordered stretches follow at residues 342 to 361 and 381 to 410; these read GEAPTSLSDEQISDGNSWDG and ERNADGTIEPSGFLLPADGEEIGATTDWSA.

Belongs to the polysaccharide lyase 9 family. Ca(2+) serves as cofactor.

It localises to the secreted. It carries out the reaction Eliminative cleavage of (1-&gt;4)-alpha-D-galacturonan to give oligosaccharides with 4-deoxy-alpha-D-galact-4-enuronosyl groups at their non-reducing ends.. Its activity is regulated as follows. Inhibited by iron ions. Activated in presence of the surfactant polysorbate 20, while inhibited in the presence of Triton X-100 and sodium dodecyl sulfate. Inhibited in presence of the organic solvents methanol, ethanol, propan-2-ol and acetone. Its function is as follows. Presents an endo-cleaving activity on the homogalacturonan (HG) region in pectin. Active on homogalacturonan with a degree of polymerization above 4, and does not appear to be affected by the degree of methylation of the substrate. Does not degrade linear rhamnogalacturonan. The polypeptide is Pectate lyase PEL9 (Emericella nidulans (strain FGSC A4 / ATCC 38163 / CBS 112.46 / NRRL 194 / M139) (Aspergillus nidulans)).